The sequence spans 1213 residues: SWI/SNF complex subunit SMARCC2 (1213 aa).

Residues 1–274 (MAVRKKDGGP…PVSRRKKISA (274 aa)) are marR-like, BRCT and chromo domains module. A MarR-like domain is found at 10–136 (PNVKYYEAAD…IEKSLVQNNC (127 aa)). Positions 140 to 183 (PNIFLCPEIEPKLLGKLKDIVKRHQGTISEDKSNASHVVYPVPG) constitute a BRCT; N-terminus domain. Residues 189–217 (EWVRPVMKRDKQVLLHWGYYPDSYDTWIP) enclose the Chromo domain. A BRCT; C-terminus domain is found at 233 to 257 (KPRKVHAKWILDTDTFNEWMNEEDY). Residues 256 to 413 (DYEVSDDKSP…GEQTKNPDLH (158 aa)) form a disordered region. Residues 275 to 284 (KTLTDEVNSP) show a composition bias toward polar residues. Serine 283, serine 286, serine 302, serine 304, and serine 306 each carry phosphoserine. At lysine 312 the chain carries N6-(ADP-ribosyl)lysine. Lysine 326 carries the N6-acetyllysine modification. Positions 331–344 (HREEEQEDLTKDMD) are enriched in basic and acidic residues. Phosphoserine is present on residues serine 347 and serine 387. Over residues 379-398 (DLDEQDDESMETTGKDEDEN) the composition is skewed to acidic residues. The 98-residue stretch at 424-521 (IIIPSYAAWF…YQVDAESRPT (98 aa)) folds into the SWIRM domain. Glycyl lysine isopeptide (Lys-Gly) (interchain with G-Cter in SUMO2) cross-links involve residues lysine 564, lysine 566, lysine 568, and lysine 592. The region spanning 596–647 (SATREWTEQETLLLLEALEMYKDDWNKVSEHVGSRTQDECILHFLRLPIEDP) is the SANT domain. Lysine 704 participates in a covalent cross-link: Glycyl lysine isopeptide (Lys-Gly) (interchain with G-Cter in SUMO2). The tract at residues 724-848 (KVTGKADPAF…AEPEGERKTK (125 aa)) is disordered. The span at 747-777 (EPERIEESGTEEARPEGQAADEKKEPKEPRE) shows a compositional bias: basic and acidic residues. Lysine 787 is covalently cross-linked (Glycyl lysine isopeptide (Lys-Gly) (interchain with G-Cter in SUMO2)). Over residues 788–848 (EEISEVPKKD…AEPEGERKTK (61 aa)) the composition is skewed to basic and acidic residues. Serine 813 carries the post-translational modification Phosphoserine. Residue lysine 848 forms a Glycyl lysine isopeptide (Lys-Gly) (interchain with G-Cter in SUMO2) linkage. Residues 907–934 (EELETIMDREREALEYQRQQLLADRQAF) are a coiled coil. Disordered stretches follow at residues 947 to 1073 (RQQH…HPGV) and 1181 to 1213 (LPSA…PPPQ). The segment covering 949-962 (QHFQQMHQQQQQQP) has biased composition (low complexity). Residues 963 to 974 (PTLPPGSQPIPP) show a composition bias toward pro residues. Low complexity predominate over residues 975–1033 (TGAAGPPTVHGLAVPPAAVASAPPGSGAPPGSLGPSEQIGQAGTTAGPQQPQQAGAPQP). Pro residues-rich tracts occupy residues 1034–1060 (GAVP…PPSM) and 1185–1201 (SPLP…PTAP).

It belongs to the SMARCC family. As to quaternary structure, component of the multiprotein chromatin-remodeling complexes SWI/SNF: SWI/SNF-A (BAF), SWI/SNF-B (PBAF) and related complexes. The canonical complex contains a catalytic subunit (either SMARCA4/BRG1/BAF190A or SMARCA2/BRM/BAF190B) and at least SMARCE1, ACTL6A/BAF53, SMARCC1/BAF155, SMARCC2/BAF170, and SMARCB1/SNF5/BAF47. Other subunits specific to each of the complexes may also be present permitting several possible combinations developmentally and tissue specific. Component of the BAF complex, which includes at least actin (ACTB), ARID1A/BAF250A, ARID1B/BAF250B, SMARCA2/BRM, SMARCA4/BRG1, ACTL6A/BAF53, ACTL6B/BAF53B, SMARCE1/BAF57, SMARCC1/BAF155, SMARCC2/BAF170, SMARCB1/SNF5/INI1, and one or more SMARCD1/BAF60A, SMARCD2/BAF60B, or SMARCD3/BAF60C. In muscle cells, the BAF complex also contains DPF3. Component of neural progenitors-specific chromatin remodeling complex (npBAF complex) composed of at least, ARID1A/BAF250A or ARID1B/BAF250B, SMARCD1/BAF60A, SMARCD3/BAF60C, SMARCA2/BRM/BAF190B, SMARCA4/BRG1/BAF190A, SMARCB1/BAF47, SMARCC1/BAF155, SMARCE1/BAF57, SMARCC2/BAF170, PHF10/BAF45A, ACTL6A/BAF53A and actin. Component of neuron-specific chromatin remodeling complex (nBAF complex) composed of at least, ARID1A/BAF250A or ARID1B/BAF250B, SMARCD1/BAF60A, SMARCD3/BAF60C, SMARCA2/BRM/BAF190B, SMARCA4/BRG1/BAF190A, SMARCB1/BAF47, SMARCC1/BAF155, SMARCE1/BAF57, SMARCC2/BAF170, DPF1/BAF45B, DPF3/BAF45C, ACTL6B/BAF53B and actin. Component of the SWI/SNF-B (PBAF) chromatin remodeling complex, at least composed of SMARCA4/BRG1, SMARCB1/BAF47/SNF5, ACTL6A/BAF53A or ACTL6B/BAF53B, SMARCE1/BAF57, SMARCD1/BAF60A, SMARCD2/BAF60B, perhaps SMARCD3/BAF60C, SMARCC1/BAF155, SMARCC2/BAF170, PBRM1/BAF180, ARID2/BAF200 and actin. May also interact with the SIN3A histone deacetylase transcription repressor complex in conjunction with SMARCA2 and SMARCA4. Interacts with SMARD1. Interacts with KDM6B. Interaction with RCOR1. Interacts with DPF2. Interacts with ERCC6. Interacts with FOS. In terms of processing, mono-ADP-ribosylation at Lys-312 by SIRT6 promotes recruitment to the enhancer region of the Heme oxygenase-1 (HO-1) locus, leading to transcription activation of the locus.

The protein resides in the nucleus. Its function is as follows. Involved in transcriptional activation and repression of select genes by chromatin remodeling (alteration of DNA-nucleosome topology). Component of SWI/SNF chromatin remodeling complexes that carry out key enzymatic activities, changing chromatin structure by altering DNA-histone contacts within a nucleosome in an ATP-dependent manner. Can stimulate the ATPase activity of the catalytic subunit of these complexes. May be required for CoREST dependent repression of neuronal specific gene promoters in non-neuronal cells. Belongs to the neural progenitors-specific chromatin remodeling complex (npBAF complex) and the neuron-specific chromatin remodeling complex (nBAF complex). During neural development a switch from a stem/progenitor to a postmitotic chromatin remodeling mechanism occurs as neurons exit the cell cycle and become committed to their adult state. The transition from proliferating neural stem/progenitor cells to postmitotic neurons requires a switch in subunit composition of the npBAF and nBAF complexes. As neural progenitors exit mitosis and differentiate into neurons, npBAF complexes which contain ACTL6A/BAF53A and PHF10/BAF45A, are exchanged for homologous alternative ACTL6B/BAF53B and DPF1/BAF45B or DPF3/BAF45C subunits in neuron-specific complexes (nBAF). The npBAF complex is essential for the self-renewal/proliferative capacity of the multipotent neural stem cells. The nBAF complex along with CREST plays a role regulating the activity of genes essential for dendrite growth. Critical regulator of myeloid differentiation, controlling granulocytopoiesis and the expression of genes involved in neutrophil granule formation. This is SWI/SNF complex subunit SMARCC2 (Smarcc2) from Mus musculus (Mouse).